Consider the following 634-residue polypeptide: Glutamate--tRNA ligase (634 aa).

A 'HIGH' region motif is present at residues 108-118; the sequence is PNPSGPLHIGH.

The protein belongs to the class-I aminoacyl-tRNA synthetase family. Glutamate--tRNA ligase type 2 subfamily.

Its subcellular location is the cytoplasm. The catalysed reaction is tRNA(Glu) + L-glutamate + ATP = L-glutamyl-tRNA(Glu) + AMP + diphosphate. Functionally, catalyzes the attachment of glutamate to tRNA(Glu) in a two-step reaction: glutamate is first activated by ATP to form Glu-AMP and then transferred to the acceptor end of tRNA(Glu). The sequence is that of Glutamate--tRNA ligase from Methanoregula boonei (strain DSM 21154 / JCM 14090 / 6A8).